Reading from the N-terminus, the 276-residue chain is ATP synthase subunit a 2 (276 aa).

5 helical membrane passes run 45–65, 105–125, 154–173, 226–246, and 247–267; these read AVHVDSLGWSIALGALFVWLF, VIAPLALTVFCWIFLMNLMDL, VNVTLGMSLSVFFLIIYYSI, LLFILIALMPFWAQWALSVPW, and AIFHILVIVLQAFIFMMLTIV.

This sequence belongs to the ATPase A chain family. F-type ATPases have 2 components, CF(1) - the catalytic core - and CF(0) - the membrane proton channel. CF(1) has five subunits: alpha(3), beta(3), gamma(1), delta(1), epsilon(1). CF(0) has three main subunits: a(1), b(2) and c(9-12). The alpha and beta chains form an alternating ring which encloses part of the gamma chain. CF(1) is attached to CF(0) by a central stalk formed by the gamma and epsilon chains, while a peripheral stalk is formed by the delta and b chains.

The protein localises to the cell inner membrane. Its function is as follows. Key component of the proton channel; it plays a direct role in the translocation of protons across the membrane. In Hahella chejuensis (strain KCTC 2396), this protein is ATP synthase subunit a 2.